A 206-amino-acid chain; its full sequence is High frequency lysogenization protein HflD homolog (206 aa).

This sequence belongs to the HflD family.

The protein resides in the cytoplasm. It localises to the cell inner membrane. This chain is High frequency lysogenization protein HflD homolog, found in Pseudomonas syringae pv. tomato (strain ATCC BAA-871 / DC3000).